The following is a 173-amino-acid chain: Alpha-crystallin A chain (173 aa).

At M1 the chain carries N-acetylmethionine. Positions 1 to 63 are required for complex formation with BFSP1 and BFSP2; sequence MDITIQHPWF…RTVLESGISE (63 aa). Q6 is subject to Deamidated glutamine; partial. Phosphoserine is present on S45. At Q50 the chain carries Deamidated glutamine; partial. The 113-residue stretch at 52–164 folds into the sHSP domain; it reads LFRTVLESGI…SDRSIPVSRE (113 aa). Residue K99 is modified to N6-acetyllysine. H100, E102, and H107 together coordinate Zn(2+). S122 carries the phosphoserine modification. N123 carries the deamidated asparagine; partial modification. The disordered stretch occupies residues 144-173; that stretch reads PKIHSNMESSHSDRSIPVSREEKPTLAPSS. Basic and acidic residues predominate over residues 153 to 167; the sequence is SHSDRSIPVSREEKP. H154 is a Zn(2+) binding site. O-linked (GlcNAc) serine glycosylation is present at S162.

This sequence belongs to the small heat shock protein (HSP20) family. Heteromer composed of three CRYAA and one CRYAB subunits. Inter-subunit bridging via zinc ions enhances stability, which is crucial as there is no protein turn over in the lens. Can also form homodimers and homotetramers (dimers of dimers) which serve as the building blocks of homooligomers. Within homooligomers, the zinc-binding motif is created from residues of 3 different molecules. His-100 and Glu-102 from one molecule are ligands of the zinc ion, and His-107 and His-154 residues from additional molecules complete the site with tetrahedral coordination geometry. Part of a complex required for lens intermediate filament formation composed of BFSP1, BFSP2 and CRYAA. In terms of processing, acetylation at Lys-99 may increase chaperone activity. Undergoes age-dependent proteolytical cleavage at the C-terminus.

The protein resides in the cytoplasm. It localises to the nucleus. Contributes to the transparency and refractive index of the lens. Acts as a chaperone, preventing aggregation of various proteins under a wide range of stress conditions. Required for the correct formation of lens intermediate filaments as part of a complex composed of BFSP1, BFSP2 and CRYAA. The sequence is that of Alpha-crystallin A chain (CRYAA) from Didelphis virginiana (North American opossum).